The sequence spans 388 residues: Putative pyridoxal phosphate-dependent aminotransferase EpsN (388 aa).

Lys190 is modified (N6-(pyridoxal phosphate)lysine).

This sequence belongs to the DegT/DnrJ/EryC1 family. It depends on pyridoxal 5'-phosphate as a cofactor.

Its function is as follows. May be involved in the production of the exopolysaccharide (EPS) component of the extracellular matrix during biofilm formation. EPS is responsible for the adhesion of chains of cells into bundles. The protein is Putative pyridoxal phosphate-dependent aminotransferase EpsN (epsN) of Bacillus subtilis (strain 168).